Consider the following 248-residue polypeptide: tRNA (guanine-N(1)-)-methyltransferase (248 aa).

S-adenosyl-L-methionine is bound by residues glycine 113 and valine 133–leucine 138.

This sequence belongs to the RNA methyltransferase TrmD family. Homodimer.

The protein resides in the cytoplasm. The enzyme catalyses guanosine(37) in tRNA + S-adenosyl-L-methionine = N(1)-methylguanosine(37) in tRNA + S-adenosyl-L-homocysteine + H(+). Specifically methylates guanosine-37 in various tRNAs. The chain is tRNA (guanine-N(1)-)-methyltransferase from Shewanella sp. (strain W3-18-1).